The primary structure comprises 102 residues: UPF0213 protein in potE 3'region (102 aa).

A GIY-YIG domain is found at serine 6 to arginine 81.

This sequence belongs to the UPF0213 family.

This chain is UPF0213 protein in potE 3'region, found in Serratia liquefaciens.